We begin with the raw amino-acid sequence, 189 residues long: Homeobox protein HD-2 (189 aa).

Positions 119 to 181 (KPRTRANFPM…NARRRILPFM (63 aa)) form a DNA-binding region, homeobox; TALE-type.

This sequence belongs to the TALE/KNOX homeobox family.

The protein resides in the nucleus. This is Homeobox protein HD-2 (HD-2) from Encephalitozoon cuniculi (strain GB-M1) (Microsporidian parasite).